The chain runs to 517 residues: Probable bifunctional methylthioribulose-1-phosphate dehydratase/enolase-phosphatase E1 1 (517 aa).

The tract at residues 1–240 (MAAAALNGLK…AIKLYQLGLD (240 aa)) is methylthioribulose-1-phosphate dehydratase. Cys112 provides a ligand contact to substrate. Zn(2+) contacts are provided by His130 and His132. Glu155 acts as the Proton donor/acceptor; for methylthioribulose-1-phosphate dehydratase activity in catalysis. Zn(2+) is bound at residue His205. Residues 278 to 517 (IVLDIEGTTT…FKTITSFSDI (240 aa)) are enolase-phosphatase E1. Positions 281 and 283 each coordinate Mg(2+). Residues 416 to 417 (SS) and Lys450 contribute to the substrate site. Mg(2+) is bound at residue Asp476.

This sequence in the N-terminal section; belongs to the aldolase class II family. MtnB subfamily. In the C-terminal section; belongs to the HAD-like hydrolase superfamily. MasA/MtnC family. Zn(2+) is required as a cofactor. It depends on Mg(2+) as a cofactor.

The enzyme catalyses 5-(methylsulfanyl)-D-ribulose 1-phosphate = 5-methylsulfanyl-2,3-dioxopentyl phosphate + H2O. It catalyses the reaction 5-methylsulfanyl-2,3-dioxopentyl phosphate + H2O = 1,2-dihydroxy-5-(methylsulfanyl)pent-1-en-3-one + phosphate. It participates in amino-acid biosynthesis; L-methionine biosynthesis via salvage pathway; L-methionine from S-methyl-5-thio-alpha-D-ribose 1-phosphate: step 2/6. The protein operates within amino-acid biosynthesis; L-methionine biosynthesis via salvage pathway; L-methionine from S-methyl-5-thio-alpha-D-ribose 1-phosphate: step 3/6. Its pathway is amino-acid biosynthesis; L-methionine biosynthesis via salvage pathway; L-methionine from S-methyl-5-thio-alpha-D-ribose 1-phosphate: step 4/6. The chain is Probable bifunctional methylthioribulose-1-phosphate dehydratase/enolase-phosphatase E1 1 from Vitis vinifera (Grape).